The chain runs to 380 residues: NADPH quinone oxidoreductase (380 aa).

A mitochondrion-targeting transit peptide spans 1–17 (MSSFLSKRFISTTQRAM).

This sequence belongs to the zinc-containing alcohol dehydrogenase family. Quinone oxidoreductase subfamily. Homodimer.

It localises to the mitochondrion. The catalysed reaction is a quinone + NADH + H(+) = a quinol + NAD(+). The enzyme catalyses a quinone + NADPH + H(+) = a quinol + NADP(+). Functionally, NADPH quinone oxidoreductase that efficiently reduces 1,4-benzoquinone, whereas no activities are found for menadiones and methoxyquinones. This chain is NADPH quinone oxidoreductase, found in Kluyveromyces marxianus (Yeast).